Consider the following 367-residue polypeptide: Nociceptin receptor (367 aa).

Topologically, residues 1-45 are extracellular; sequence MESLFPAPYWEVLYGSHFQGNLSLLNETVPHHLLLNASHSAFLPL. 3 N-linked (GlcNAc...) asparagine glycosylation sites follow: N21, N26, and N36. The chain crosses the membrane as a helical span at residues 46 to 71; sequence GLKVTIVGLYLAVCIGGLLGNCLVMY. Residues 72–84 lie on the Cytoplasmic side of the membrane; the sequence is VILRHTKMKTATN. A helical transmembrane segment spans residues 85-106; that stretch reads IYIFNLALADTLVLLTLPFQGT. Topologically, residues 107-121 are extracellular; sequence DILLGFWPFGNALCK. C120 and C197 are disulfide-bonded. The helical transmembrane segment at 122-143 threads the bilayer; it reads TVIAIDYYNMFTSTFTLTAMSV. At 144 to 162 the chain is on the cytoplasmic side; it reads DRYVAICHPIRALDVRTSS. The helical transmembrane segment at 163–185 threads the bilayer; that stretch reads KAQAVNVAIWALASVVGVPVAIM. At 186–208 the chain is on the extracellular side; that stretch reads GSAQVEDEEIECLVEIPAPQDYW. Residues 209-233 form a helical membrane-spanning segment; that stretch reads GPVFAICIFLFSFIIPVLIISVCYS. Residues 234–261 lie on the Cytoplasmic side of the membrane; it reads LMIRRLRGVRLLSGSREKDRNLRRITRL. Residues 262–282 traverse the membrane as a helical segment; the sequence is VLVVVAVFVGCWTPVQVFVLV. Residues 283 to 297 lie on the Extracellular side of the membrane; that stretch reads QGLGVQPGSETAVAI. A helical transmembrane segment spans residues 298–319; that stretch reads LRFCTALGYVNSCLNPILYAFL. The Cytoplasmic portion of the chain corresponds to 320-367; the sequence is DENFKACFRKFCCASSLHREMQVSDRVRSIAKDVGLGCKTSETVPRPA. C331 carries S-palmitoyl cysteine lipidation.

Belongs to the G-protein coupled receptor 1 family. Post-translationally, phosphorylation at Ser-360 requires GRK3. In terms of tissue distribution, highly expressed in several brain areas, the intestine, liver and spleen. Detected in sympathetic stellate ganglion neurons.

The protein resides in the cell membrane. Its subcellular location is the cytoplasmic vesicle. In terms of biological role, G-protein coupled opioid receptor that functions as a receptor for the endogenous neuropeptide nociceptin. Ligand binding causes a conformation change that triggers signaling via guanine nucleotide-binding proteins (G proteins) and modulates the activity of down-stream effectors. Signaling via G proteins mediates inhibition of adenylate cyclase activity and calcium channel activity. Arrestins modulate signaling via G proteins and mediate the activation of alternative signaling pathways that lead to the activation of MAP kinases. Plays a role in modulating nociception and the perception of pain. Plays a role in the regulation of locomotor activity by the neuropeptide nociceptin. This chain is Nociceptin receptor (Oprl1), found in Rattus norvegicus (Rat).